The sequence spans 272 residues: Sulfate transporter CysZ (272 aa).

4 helical membrane-spanning segments follow: residues 29–49 (FVIMPIVLNTILLCGLFWLFI), 66–86 (WLSFLSVILLTLSILTILLLF), 148–168 (IIALFLLSFIPLVGQTIVPVL), and 219–239 (FVPVINLLIMPVAVCGATLMW).

This sequence belongs to the CysZ family.

Its subcellular location is the cell inner membrane. In terms of biological role, high affinity, high specificity proton-dependent sulfate transporter, which mediates sulfate uptake. Provides the sulfur source for the cysteine synthesis pathway. The polypeptide is Sulfate transporter CysZ (Haemophilus influenzae (strain PittGG)).